We begin with the raw amino-acid sequence, 75 residues long: Large ribosomal subunit protein bL31 (75 aa).

The Zn(2+) site is built by Cys16, Cys18, Cys37, and Cys40.

This sequence belongs to the bacterial ribosomal protein bL31 family. Type A subfamily. As to quaternary structure, part of the 50S ribosomal subunit. The cofactor is Zn(2+).

Binds the 23S rRNA. In Nitrosospira multiformis (strain ATCC 25196 / NCIMB 11849 / C 71), this protein is Large ribosomal subunit protein bL31.